The primary structure comprises 526 residues: Butyrophilin subfamily 1 member A1 (526 aa).

The first 26 residues, 1–26 (MAVFPNSCLAGCLLIFILLQLPKLDS), serve as a signal peptide directing secretion. Ig-like V-type domains lie at 27–140 (APFD…VHLK) and 148–234 (PHIS…VEVS). The Extracellular segment spans residues 27-242 (APFDVIGPQE…VSIPASFFPR (216 aa)). 2 disulfides stabilise this stretch: cysteine 50–cysteine 124 and cysteine 164–cysteine 218. N-linked (GlcNAc...) (complex) asparagine glycosylation is present at asparagine 55. A glycan (N-linked (GlcNAc...) (hybrid) asparagine) is linked at asparagine 215. Residues 243 to 269 (LTPWMVAVAVILVVLGLLTIGSIFFTW) traverse the membrane as a helical segment. The Cytoplasmic segment spans residues 270 to 526 (RLYKERSRQR…IPLQPSQGVP (257 aa)). The B30.2/SPRY domain maps to 285 to 479 (SKEKLLEELK…LTICPVTDGL (195 aa)).

The protein belongs to the immunoglobulin superfamily. BTN/MOG family. Seems to associate with xanthine dehydrogenase/oxidase. Expressed in mammary tissue.

Its subcellular location is the membrane. Functionally, may function in the secretion of milk-fat droplets. May act as a specific membrane-associated receptor for the association of cytoplasmic droplets with the apical plasma membrane. Inhibits the proliferation of CD4 and CD8 T-cells activated by anti-CD3 antibodies, T-cell metabolism and IL2 and IFNG secretion. This is Butyrophilin subfamily 1 member A1 (BTN1A1) from Bos taurus (Bovine).